The primary structure comprises 1508 residues: MVGMLFVWQTFLFVWACAAAVEVGEKPRPVIDIVRDVDNLGSIWQFKGTNTLIRHQGREILVRHGGDQWSTVKKFDQGVNTVEVDPYYPERRAFAWLENNELYKTDDCGKTWARVMHVEAEPGENLQRYSVYSNPDNYKYLMVTSHFERKDSSPVLAESYEKQWVSQDGGKTIAPLGHPDPGVYRLCHFLRQARNHDVAKDSTILCIEHDAQKHTAVLYRTDDFGKSKQALDSFDDEIVSSVGLLGKYILVTTTEDAYNKHAVQHVWVSRDGDKFQKIIFPTHIRDNFFRAVTTSTGNQIIFSIPAGKHSHSRKNALYANYISDSSGIQFHAVADSLDERYKELGPVMALDANGTLSMVARKSSTEDQVTLLSYDYGYSWQPMHLAEGEDHKALGCSKGGKECELPVQLSQLVSSSGLVGHGESATSGILMGIVLKKRGSRGPRKHKYLSVISRDYGLTWSVAFEYPVLSFAGNYGNILLACPYNPGDDGDPEEEIYYSLDQGHTWEEHHIEGKYEFVRVHSAISDGSSTAFSFLAVGDDQNTIVVDCIFTDIHNGKECTDGDMEEYKLRNGNCLNGARYTINKRKSEAACLLKNDPSVINPLVKPCDCTNADYECSLGFLGLPDKGCTADLGMLRSAGACKDNPRELMPMHKIKGNECTKDLNIEPVKVDCSAVQNRPDIEVTAHVFKTQFETYQYFNSAEDDSLMVLTKDKRALISHDSGKTFKMLDTLGSGAELITFNRYFGDLAYIFASDDVLYITDDRGYHFYAVDLPEVRHLFLPLAFHAKDNQTFIYFGGKDCEKLGPKCHSTAYITTDGGRNFREMLTGAVSCEFVGSIYSHPANKDMIMCEIENKKERRNILLRSTDEFRTSDKVFDSIIGFHTTGDFTAIAVSEGRQQVSSYLTIDGVHFNESRFPPDFVAPEKQQSYSVLSAHEGAIFLHMSKSLVKHKEYGTLVKSDSNGIDFVVLKDGVNSNAEGLVDFETPEGLDGVILINVVENLDQVQKGKAKAKHLKTAISFNDGVDWKYLSPPGKDSSGKKYPCHGKNRAKCSLNLHGYTERKDLRDTYSSGSAIGYMLGVGNVGEHLLPYEQCSTFLTTDGGVTWTEVKSTPHQWEFGDRGSIIVLVPDGVKTNSITYSVDAGRSWQDFKFADEEVIIDDIITVPYDTSMRFLLISKEHLRGKSKTYAISFAHIFKRQCEFHPGGGRHNGDFEYTSIKHPDYKCLFGKEVEFLKRIKYDCFIGNASYTKDYRTSRICPCTRQDFECDYNYIRTSDGTCKLPSGVKPEAPSAVCERNRDLVEYFQPTGYRKIPLSKCEGGLKLQRTDSPHPCPGKEKEFYEKYPSSTNASSVVFWWLLLTMVLLVPLWVIYDRGIRRNGGFSRFGEIRLDDDDLIEENGLDRAINKVVKVGAYGVAGLFGFLLLLKSKAGARIRRFRESVSSRRGPSYSSLISDQFLDDANDLLVGHDNDANNLNAFLDEDGQHFDVDDEIEGADQASYHDDVDLGRTSE.

Positions 1 to 20 (MVGMLFVWQTFLFVWACAAA) are cleaved as a signal peptide. Residues 21–1348 (VEVGEKPRPV…EKYPSSTNAS (1328 aa)) are Lumenal-facing. The stretch at 164-172 (WVSQDGGKT) is one BNR 1 repeat. A glycan (N-linked (GlcNAc...) asparagine) is linked at Asn353. 4 BNR repeats span residues 372–381 (LSYDYGYSWQ), 452–461 (ISRDYGLTWS), 497–507 (YYSLDQGHTWE), and 717–726 (ISHDSGKTFK). Asn789 is a glycosylation site (N-linked (GlcNAc...) asparagine). A BNR 6 repeat occupies 812 to 822 (YITTDGGRNFR). The N-linked (GlcNAc...) asparagine glycan is linked to Asn911. BNR repeat units follow at residues 1095–1105 (FLTTDGGVTWT) and 1137–1146 (YSVDAGRSWQ). N-linked (GlcNAc...) asparagine glycosylation is found at Asn1243 and Asn1346. The helical transmembrane segment at 1349–1369 (SVVFWWLLLTMVLLVPLWVIY) threads the bilayer. Residues 1370 to 1404 (DRGIRRNGGFSRFGEIRLDDDDLIEENGLDRAINK) are Cytoplasmic-facing. A helical membrane pass occupies residues 1405 to 1425 (VVKVGAYGVAGLFGFLLLLKS). The Lumenal segment spans residues 1426-1508 (KAGARIRRFR…DDVDLGRTSE (83 aa)).

The protein belongs to the VPS10-related sortilin family.

The protein localises to the golgi apparatus. It is found in the trans-Golgi network membrane. It localises to the prevacuolar compartment membrane. Functions as a sorting receptor in the Golgi compartment required for the intracellular sorting and delivery of soluble vacuolar proteins, like carboxypeptidase Y (CPY) and proteinase A. Executes multiple rounds of sorting by cycling between the late Golgi and a prevacuolar endosome-like compartment. The sequence is that of Vacuolar protein sorting/targeting protein 10 (VPS10) from Eremothecium gossypii (strain ATCC 10895 / CBS 109.51 / FGSC 9923 / NRRL Y-1056) (Yeast).